Consider the following 367-residue polypeptide: 15-cis-zeta-carotene isomerase, chloroplastic (367 aa).

The N-terminal 58 residues, 1–58, are a transit peptide targeting the chloroplast; that stretch reads MAVYHLLLSSPPSLLLLPPSPRRPNLTLIRRIPAHPRLGNSTSLLSSSSPVIRKILVR. A run of 6 helical transmembrane segments spans residues 95–115, 137–157, 172–192, 211–231, 269–289, and 339–359; these read SWVY…VVWI, EVAM…LASL, VLFA…FINH, AIWV…FNLL, LWIG…HHLF, and LPYL…PLMQ.

Expressed in leaves and at lower levels in roots.

It localises to the plastid. The protein resides in the chloroplast membrane. The enzyme catalyses 9,9',15-tri-cis-zeta-carotene = 9,9'-di-cis-zeta-carotene. Functionally, isomerase involved in the biosynthesis of carotenoids. Catalyzes the cis- to trans-conversion of the 15-cis-bond in 9,15,9'-tri-cis-zeta-carotene. This chain is 15-cis-zeta-carotene isomerase, chloroplastic (Z-ISO), found in Arabidopsis thaliana (Mouse-ear cress).